The following is a 556-amino-acid chain: Arginine--tRNA ligase (556 aa).

The 'HIGH' region motif lies at 117–127 (PNVAKQMHVGH).

This sequence belongs to the class-I aminoacyl-tRNA synthetase family. In terms of assembly, monomer.

The protein resides in the cytoplasm. It carries out the reaction tRNA(Arg) + L-arginine + ATP = L-arginyl-tRNA(Arg) + AMP + diphosphate. The polypeptide is Arginine--tRNA ligase (Cutibacterium acnes (strain DSM 16379 / KPA171202) (Propionibacterium acnes)).